Reading from the N-terminus, the 166-residue chain is Protein C2-DOMAIN ABA-RELATED 11 (166 aa).

Met-1 carries the post-translational modification N-acetylmethionine. Positions 1 to 103 (MGEPLGLLQV…ISVARLRHVV (103 aa)) constitute a C2 domain. Gly-2 bears the N-acetylglycine; in Protein C2-DOMAIN ABA-RELATED 11, N-terminally processed mark. Positions 21, 22, 27, 73, 74, 75, and 81 each coordinate Ca(2+).

This sequence belongs to the plant CAR protein family. As to quaternary structure, binds to PYR/PYL/RCAR abscisic acid intracellular receptors in an ABA-independent manner, both at the plasma membrane and in the nucleus.

The protein resides in the cell membrane. Its subcellular location is the nucleus. Its function is as follows. Stimulates the GTPase/ATPase activities of Obg-like ATPases. Mediates the transient calcium-dependent interaction of PYR/PYL/RCAR abscisic acid (ABA) receptors with the plasma membrane and thus regulates ABA sensitivity. The chain is Protein C2-DOMAIN ABA-RELATED 11 from Arabidopsis thaliana (Mouse-ear cress).